The sequence spans 423 residues: UPF0229 protein PSPTO_0546 (423 aa).

Positions H65–M110 are disordered. The segment covering G93 to G107 has biased composition (gly residues).

Belongs to the UPF0229 family.

The sequence is that of UPF0229 protein PSPTO_0546 from Pseudomonas syringae pv. tomato (strain ATCC BAA-871 / DC3000).